The primary structure comprises 202 residues: Orotate phosphoribosyltransferase (202 aa).

5-phospho-alpha-D-ribose 1-diphosphate contacts are provided by residues K93 and 113-121 (EDIITTGGS). Orotate is bound by residues T117 and R145.

Belongs to the purine/pyrimidine phosphoribosyltransferase family. PyrE subfamily. As to quaternary structure, homodimer. The cofactor is Mg(2+).

The catalysed reaction is orotidine 5'-phosphate + diphosphate = orotate + 5-phospho-alpha-D-ribose 1-diphosphate. It functions in the pathway pyrimidine metabolism; UMP biosynthesis via de novo pathway; UMP from orotate: step 1/2. In terms of biological role, catalyzes the transfer of a ribosyl phosphate group from 5-phosphoribose 1-diphosphate to orotate, leading to the formation of orotidine monophosphate (OMP). This Campylobacter hominis (strain ATCC BAA-381 / DSM 21671 / CCUG 45161 / LMG 19568 / NCTC 13146 / CH001A) protein is Orotate phosphoribosyltransferase.